The following is a 312-amino-acid chain: Iron/alpha-ketoglutarate-dependent dioxygenase penM (312 aa).

3 residues coordinate Fe cation: H134, D136, and H211. Residues 287-312 (LGLKSEQPLPDGMEKGSMQETDIGGQ) form a disordered region.

This sequence belongs to the PhyH family. Homodimer. Requires Fe cation as cofactor.

The enzyme catalyses (-)-cyclopeptine + 2-oxoglutarate + O2 = (Z)-dehydrocyclopeptine + succinate + CO2 + H2O. The catalysed reaction is (Z)-dehydrocyclopeptine + 2-oxoglutarate + O2 = (-)-cyclopenine + succinate + CO2. It carries out the reaction (-)-4'-methoxycyclopeptine + 2-oxoglutarate + O2 = (Z)-4'-methoxydehydrocyclopeptine + succinate + CO2 + H2O. It catalyses the reaction (Z)-4'-methoxydehydrocyclopeptine + 2-oxoglutarate + O2 = (-)-4'-methoxycyclopenine + succinate + CO2. It participates in secondary metabolite biosynthesis. The protein operates within alkaloid biosynthesis. It functions in the pathway mycotoxin biosynthesis. Functionally, iron/alpha-ketoglutarate-dependent dioxygenase; part of the gene cluster that mediates the biosynthesis of penigequinolones, potent insecticidal alkaloids that contain a highly modified 10-carbon prenyl group. The first stage is catalyzed by the nonribosomal peptide synthetase penN that condenses anthranilic acid and O-methyl-L-tyrosine to produce 4'-methoxycyclopeptin. 4'-methoxycyclopeptin is then converted to 4'-methoxydehydrocyclopeptin by the ketoglutarate-dependent dioxygenase penM through dehydrogenation to form a double bond between C-alpha and C-beta of the O-methyltyrosine side chain. PenM also converts its first product methoxydehydrocyclopeptin to 4'-methoxycyclopenin. The following conversion of 4'methoxycyclopenin into 4'-methoxyviridicatin is catalyzed by the cyclopenase penL. 4'-methoxyviridicatin is the precursor of quinolone natural products, and is further converted to quinolinone B. The prenyltransferase penI then catalyzes the canonical Friedel-Crafts alkylation of quinolinone B with dimethylallyl cation to yield dimethylallyl quinolone, which is subjected to FAD-dependent dehydrogenation by the FAD-linked oxidoreductase penH to yield conjugated aryl diene. The delta(3') double bond then serves as the site of the second alkylation with DMAPP catalyzed by the prenyltransferase penG to yield a carbenium ion intermediate, which can be attacked by H(2)O to yield a styrenyl quinolone containing a C3'-hydroxyprenyl chain, or undergo cyclization to yield yaequinolones J1 and J2. The conversion of the styrenyl quinolone into the tetrahydrofuran-containing yaequinolone C is performed by the FAD-dependent monooxygenase penE and involves epoxidation of the terminal C7'-C8' olefin, followed by epoxide ring opening initiated by the C3' hydroxyl group. The predicted cysteine hydrolase penJ acts as an epoxide hydrolase that enhances the rate of the 5-exo-tet cyclization step, increasing the yield of yaequinolone C. PenF catalyzes the cationic rearrangement of the epoxide formed by penE (before ring opening to produce yaequinolone C) into yaequinolone D. Finally, the short-chain dehydrogenase/reductase (SDR)-like reductase penD, catalyzes both the dehydration of yaequinolone D and the reduction of the resulting oxonium to yield penigequinolone. This Penicillium thymicola protein is Iron/alpha-ketoglutarate-dependent dioxygenase penM.